A 558-amino-acid polypeptide reads, in one-letter code: Glucose-6-phosphate isomerase (558 aa).

Residue Glu362 is the Proton donor of the active site. Residues His393 and Lys523 contribute to the active site.

Belongs to the GPI family.

Its subcellular location is the cytoplasm. It carries out the reaction alpha-D-glucose 6-phosphate = beta-D-fructose 6-phosphate. It participates in carbohydrate degradation; glycolysis; D-glyceraldehyde 3-phosphate and glycerone phosphate from D-glucose: step 2/4. The sequence is that of Glucose-6-phosphate isomerase (Pgi) from Drosophila simulans (Fruit fly).